The chain runs to 162 residues: Allantoicase (162 aa).

Belongs to the allantoicase family. As to quaternary structure, homohexamer. As to expression, expressed in zygote.

It carries out the reaction allantoate + H2O = (S)-ureidoglycolate + urea. Its pathway is nitrogen metabolism; (S)-allantoin degradation; (S)-ureidoglycolate from allantoate (aminidohydrolase route): step 1/1. In terms of biological role, catalyzes the degradation of allantoate to (-)-ureidoglycolate and (+)-ureidoglycolate to glyoxylate. This chain is Allantoicase, found in Chlamydomonas reinhardtii (Chlamydomonas smithii).